The chain runs to 117 residues: Holo-[acyl-carrier-protein] synthase (117 aa).

Residues Asp-8 and Glu-58 each contribute to the Mg(2+) site.

The protein belongs to the P-Pant transferase superfamily. AcpS family. Mg(2+) serves as cofactor.

Its subcellular location is the cytoplasm. It carries out the reaction apo-[ACP] + CoA = holo-[ACP] + adenosine 3',5'-bisphosphate + H(+). Functionally, transfers the 4'-phosphopantetheine moiety from coenzyme A to a Ser of acyl-carrier-protein. The protein is Holo-[acyl-carrier-protein] synthase of Shouchella clausii (strain KSM-K16) (Alkalihalobacillus clausii).